The chain runs to 89 residues: Small ribosomal subunit protein uS17 (89 aa).

It belongs to the universal ribosomal protein uS17 family. As to quaternary structure, part of the 30S ribosomal subunit.

In terms of biological role, one of the primary rRNA binding proteins, it binds specifically to the 5'-end of 16S ribosomal RNA. The polypeptide is Small ribosomal subunit protein uS17 (Syntrophomonas wolfei subsp. wolfei (strain DSM 2245B / Goettingen)).